The following is a 258-amino-acid chain: Thiamine thiazole synthase (258 aa).

NAD(+) contacts are provided by residues Ser36, 55 to 56 (ER), Gly63, Ile127, and 153 to 155 (HVD). Asp155 and His170 together coordinate Fe cation. Position 224 (Met224) interacts with NAD(+). Arg234 provides a ligand contact to glycine.

This sequence belongs to the THI4 family. As to quaternary structure, homooctamer; tetramer of dimers. Fe(2+) is required as a cofactor.

The catalysed reaction is hydrogen sulfide + glycine + NAD(+) = ADP-5-ethyl-4-methylthiazole-2-carboxylate + nicotinamide + 3 H2O + H(+). It participates in cofactor biosynthesis; thiamine diphosphate biosynthesis. Functionally, involved in the biosynthesis of the thiazole moiety of thiamine. Catalyzes the conversion of NAD and glycine to adenosine diphosphate 5-(2-hydroxyethyl)-4-methylthiazole-2-carboxylate (ADT), an adenylated thiazole intermediate, using free sulfide as a source of sulfur. The protein is Thiamine thiazole synthase of Methanothermobacter thermautotrophicus (strain ATCC 29096 / DSM 1053 / JCM 10044 / NBRC 100330 / Delta H) (Methanobacterium thermoautotrophicum).